The chain runs to 284 residues: Avenin-like b3 (284 aa).

The N-terminal stretch at 1 to 18 (MKVFILALLALTATTAIA) is a signal peptide.

Belongs to the prolamin family. Contains disulfide bonds.

Functionally, seed storage protein. Might be integrated via inter-chain disulfide bonds within the glutenin polymer. The chain is Avenin-like b3 from Triticum aestivum (Wheat).